Here is a 178-residue protein sequence, read N- to C-terminus: uncharacterized protein (178 aa).

An N-terminal signal peptide occupies residues 1–23 (MNYSVIWAITILILGLVLTLAWA).

This is an uncharacterized protein from Invertebrate iridescent virus 3 (IIV-3).